A 248-amino-acid polypeptide reads, in one-letter code: Transcription factor MYBC1 (248 aa).

The segment at residues Thr102–Arg161 is a DNA-binding region (myb-like GARP).

As to expression, expressed in roots, leaves, stems, petioles, filaments, stigma, pedicels, sepals, anthers, petals, and siliques.

It is found in the nucleus. Probable transcription factor that acts as a negative regulator of freezing tolerance via a CBF-independent pathway. This Arabidopsis thaliana (Mouse-ear cress) protein is Transcription factor MYBC1.